The following is a 493-amino-acid chain: Cysteine--tRNA ligase (493 aa).

Residue C29 participates in Zn(2+) binding. Positions 31–41 (VTVYDYCHIGH) match the 'HIGH' region motif. Residues C209, H234, and E238 each coordinate Zn(2+). The 'KMSKS' region signature appears at 266–270 (KMSKS). K269 is an ATP binding site.

The protein belongs to the class-I aminoacyl-tRNA synthetase family. Monomer. Requires Zn(2+) as cofactor.

The protein resides in the cytoplasm. The catalysed reaction is tRNA(Cys) + L-cysteine + ATP = L-cysteinyl-tRNA(Cys) + AMP + diphosphate. In Pelobacter propionicus (strain DSM 2379 / NBRC 103807 / OttBd1), this protein is Cysteine--tRNA ligase.